The sequence spans 970 residues: Protein CLASP-3 (970 aa).

Disordered regions lie at residues 314-377 and 651-675; these read SRLA…QKAR and NGIS…ETPH. Residues 344–355 are compositionally biased toward polar residues; the sequence is GSRTRTSSITSN. The HEAT repeat unit spans residues 905–943; the sequence is ITPCVIKAYQSTSSSVRKTVVYCLVAMVNRVGEQRMAPH.

The protein belongs to the CLASP family.

The protein localises to the cytoplasm. It is found in the cytoskeleton. Its function is as follows. Microtubule plus-end tracking protein that promotes the stabilization of dynamic microtubules. The polypeptide is Protein CLASP-3 (cls-3) (Caenorhabditis briggsae).